A 419-amino-acid polypeptide reads, in one-letter code: Hyaluronan synthase (419 aa).

5 helical membrane-spanning segments follow: residues 8–28 (LIVLSFIFLISILIYLNMYLF), 33–53 (VGIYGVILITYLVIKLGLSFL), 318–338 (IVALWTIFEVVMFMMLIVAIG), 345–365 (AIQLDLIKLFAFLSIIFIVAL), and 376–396 (PASFLLSPLYGILHLFVLQPL).

This sequence belongs to the NodC/HAS family. The cofactor is Mg(2+).

It is found in the cell membrane. The enzyme catalyses [hyaluronan](n) + UDP-N-acetyl-alpha-D-glucosamine = N-acetyl-beta-D-glucosaminyl-(1-&gt;4)-[hyaluronan](n) + UDP + H(+). It catalyses the reaction N-acetyl-beta-D-glucosaminyl-(1-&gt;4)-[hyaluronan](n) + UDP-alpha-D-glucuronate = [hyaluronan](n+1) + UDP + H(+). It participates in glycan biosynthesis; hyaluronan biosynthesis. Functionally, glycosaminoglycan synthesis. The hyaluronic acid capsule is involved in the pathogenicity of group A Streptococci; it may be the major virulence determinant. This chain is Hyaluronan synthase (hasA), found in Streptococcus pyogenes serotype M6 (strain ATCC BAA-946 / MGAS10394).